The sequence spans 201 residues: Large ribosomal subunit protein bL25 (201 aa).

Positions 181–201 (APRESEEEAEEEATETAKESE) are disordered. Over residues 185–194 (SEEEAEEEAT) the composition is skewed to acidic residues.

It belongs to the bacterial ribosomal protein bL25 family. CTC subfamily. Part of the 50S ribosomal subunit; part of the 5S rRNA/L5/L18/L25 subcomplex. Contacts the 5S rRNA. Binds to the 5S rRNA independently of L5 and L18.

Functionally, this is one of the proteins that binds to the 5S RNA in the ribosome where it forms part of the central protuberance. The chain is Large ribosomal subunit protein bL25 from Thermoanaerobacter pseudethanolicus (strain ATCC 33223 / 39E) (Clostridium thermohydrosulfuricum).